A 131-amino-acid polypeptide reads, in one-letter code: Small ribosomal subunit protein uS8 (131 aa).

The protein belongs to the universal ribosomal protein uS8 family. Part of the 30S ribosomal subunit. Contacts proteins S5 and S12.

In terms of biological role, one of the primary rRNA binding proteins, it binds directly to 16S rRNA central domain where it helps coordinate assembly of the platform of the 30S subunit. This is Small ribosomal subunit protein uS8 from Nitrosomonas europaea (strain ATCC 19718 / CIP 103999 / KCTC 2705 / NBRC 14298).